Reading from the N-terminus, the 87-residue chain is Toxin CngtIII (87 aa).

Residues 1 to 19 (MNSLLMITACLVLFGTVWA) form the signal peptide. Residues 20–85 (KEGYLVNKST…TYPLPNKTCS (66 aa)) form the LCN-type CS-alpha/beta domain. Intrachain disulfides connect Cys31–Cys84, Cys35–Cys60, Cys44–Cys65, and Cys48–Cys67.

It belongs to the long (4 C-C) scorpion toxin superfamily. Sodium channel inhibitor family. Beta subfamily. As to expression, expressed by the venom gland.

Its subcellular location is the secreted. Beta toxins bind voltage-independently at site-4 of sodium channels (Nav) and shift the voltage of activation toward more negative potentials thereby affecting sodium channel activation and promoting spontaneous and repetitive firing. The polypeptide is Toxin CngtIII (Centruroides noxius (Mexican scorpion)).